Here is a 786-residue protein sequence, read N- to C-terminus: Neprilysin-3 (786 aa).

Residues 1–52 (MTRYKQTEFTEDDSSSIGGIQLNEATGHTGMQIRYHTARATWNWRSRNKTEK) lie on the Cytoplasmic side of the membrane. The chain crosses the membrane as a helical; Signal-anchor for type II membrane protein span at residues 53–73 (WLLITTFVMAITIFTLLIVLF). Over 74–786 (TDGGSSDATK…MNPTEKCEVW (713 aa)) the chain is Extracellular. The Peptidase M13 domain maps to 102–786 (PCLNKHCIFA…MNPTEKCEVW (685 aa)). Intrachain disulfides connect cysteine 103-cysteine 108, cysteine 126-cysteine 771, cysteine 134-cysteine 731, cysteine 190-cysteine 450, and cysteine 659-cysteine 783. N-linked (GlcNAc...) asparagine glycosylation is found at asparagine 216, asparagine 226, asparagine 256, asparagine 279, asparagine 305, asparagine 325, asparagine 356, asparagine 388, asparagine 496, and asparagine 569. Histidine 622 is a binding site for Zn(2+). The active site involves glutamate 623. Zn(2+) contacts are provided by histidine 626 and glutamate 682. Aspartate 686 serves as the catalytic Proton donor. Asparagine 715 carries N-linked (GlcNAc...) asparagine glycosylation.

It belongs to the peptidase M13 family. Zn(2+) is required as a cofactor.

Its subcellular location is the cell membrane. It catalyses the reaction Preferential cleavage of polypeptides between hydrophobic residues, particularly with Phe or Tyr at P1'.. Functionally, metalloendoprotease which is required in the dorsal paired medial neurons for the proper formation of long-term (LTM) and middle-term memories (MTM). Also required in the mushroom body neurons where it functions redundantly with neprilysins Nep2 and Nep4 in normal LTM formation. This Drosophila melanogaster (Fruit fly) protein is Neprilysin-3.